A 303-amino-acid chain; its full sequence is Methyltransferase ktnA (303 aa).

The protein belongs to the class I-like SAM-binding methyltransferase superfamily. S-adenosyl-L-methionine serves as cofactor.

Non-reducing polyketide synthase; part of the gene cluster that mediates the biosynthesis of the bicoumarin kotanin. The non-reducing polyketide synthase ktnS first catalyzes the formation of the pentaketidic 4,7-dihydroxy-5-methylcoumarin from acetyl coenzyme A and 4 malonyl coenzyme A molecules. Further O-methylation by ktnB leads to the formation of 7-demethylsiderin. Then, an oxidative phenol coupling catalyzed by the cytochrome P450 monooxygenase ktnC forms the 8,8'-dimer P-orlandin via dimerization the monomeric precursor, 7-demethylsiderin. P-orlandin is subsequently O-methylated in a stepwise fashion to demethylkotanin and kotanin. The function of ktnA within the pathway has not been determined yet. This Aspergillus niger (strain ATCC MYA-4892 / CBS 513.88 / FGSC A1513) protein is Methyltransferase ktnA.